The following is a 571-amino-acid chain: MNSLSLLLFCIFFVFSTFAKKVYYEAENGKLDGVTVYKSDLTGFSGTGYVGRFENPGNSVTVTVEVPQTGMYDLTIVYCANMGQKINSLTVNGQSAGDITFTENTKFEDLNVGAIYLNKGKNTIGLVSSWGWMWVDAFVINDAPNAAKDVTSKLNPTLINPKAIPAAKKLYDFLKTNYGKRILSGQVGAAGQAGDEGQEIQRIQKATGKLPAVWNMDFIFESNDCTWRPQNPDITEMAINWWKKYQGKGIMSAQWHWNIAGKTGDFAFYKKDTTFSIDNAVTEGTWEYEKIIKDIDRVAGHIKKLQAVNMPLIWRPLHENDGDWFWWGNNPKSCAKLWKILYERMVNYHGLNNLIWLWNGKNDANTPVDYIDIIGVDIYANDHGPQTTAYNTHFDFYGGKKMVVLSENGRIPDIQQCVDQNAWWGYFQTWNSEFILQDSYHTDAQLKEYFTHKTVMNMDELPSFNVNSYEYQSGNNNNNSSNNNNNNNSSECFSIPLGYPCCKGNTVVYTDNDGDWGVENNEWCGIGNSSSAVVCWSEALGYPCCVSSSDVYYTDNDGEWGVENGDWCGII.

The first 19 residues, 1–19 (MNSLSLLLFCIFFVFSTFA), serve as a signal peptide directing secretion. The CBM6 domain maps to 22–141 (VYYEAENGKL…WMWVDAFVIN (120 aa)). The GH26 domain maps to 165–459 (PAAKKLYDFL…FTHKTVMNMD (295 aa)). Trp286 serves as a coordination point for substrate. Residue Glu319 is the Proton donor of the active site. Substrate-binding residues include Trp324 and Tyr379. Glu407 serves as the catalytic Nucleophile. CBM10 domains follow at residues 491 to 527 (ECFS…CGIG) and 534 to 571 (VCWS…CGII).

This sequence belongs to the glycosyl hydrolase 26 family.

The catalysed reaction is Random hydrolysis of (1-&gt;4)-beta-D-mannosidic linkages in mannans, galactomannans and glucomannans.. This is Mannan endo-1,4-beta-mannosidase B (MANB) from Piromyces sp.